Consider the following 86-residue polypeptide: Latartoxin-1b (86 aa).

The N-terminal stretch at 1–19 (MKILVLAVVCTVLLQVALS) is a signal peptide. Residues 20–26 (ADSEEVR) constitute a propeptide, removed in mature form. Positions 23–26 (EEVR) match the Processing quadruplet motif motif. 4 disulfides stabilise this stretch: Cys-28–Cys-43, Cys-35–Cys-48, Cys-42–Cys-65, and Cys-50–Cys-63.

It belongs to the neurotoxin 19 (CSTX) family. Post-translationally, contains 4 disulfide bonds. Cleavage of the propeptide depends on the processing quadruplet motif (XXXR, with at least one of X being E). Expressed by the venom gland.

It localises to the secreted. Functionally, insect toxin. This is Latartoxin-1b from Lachesana tarabaevi (Spider).